We begin with the raw amino-acid sequence, 722 residues long: 1,4-alpha-glucan branching enzyme GlgB (722 aa).

Asp-401 functions as the Nucleophile in the catalytic mechanism. Glu-454 (proton donor) is an active-site residue.

This sequence belongs to the glycosyl hydrolase 13 family. GlgB subfamily. In terms of assembly, monomer.

It carries out the reaction Transfers a segment of a (1-&gt;4)-alpha-D-glucan chain to a primary hydroxy group in a similar glucan chain.. It functions in the pathway glycan biosynthesis; glycogen biosynthesis. In terms of biological role, catalyzes the formation of the alpha-1,6-glucosidic linkages in glycogen by scission of a 1,4-alpha-linked oligosaccharide from growing alpha-1,4-glucan chains and the subsequent attachment of the oligosaccharide to the alpha-1,6 position. The protein is 1,4-alpha-glucan branching enzyme GlgB of Rubrobacter xylanophilus (strain DSM 9941 / JCM 11954 / NBRC 16129 / PRD-1).